Here is a 296-residue protein sequence, read N- to C-terminus: Glycine N-acyltransferase (296 aa).

3 positions are modified to N6-acetyllysine; alternate: K16, K127, and K141. Residues K16, K127, and K141 each carry the N6-succinyllysine; alternate modification. N6-acetyllysine is present on K159. The residue at position 169 (K169) is an N6-succinyllysine. Residues K183 and K256 each carry the N6-acetyllysine; alternate modification. K183 and K256 each carry N6-succinyllysine; alternate.

It belongs to the glycine N-acyltransferase family.

The protein resides in the mitochondrion. It carries out the reaction an acyl-CoA + glycine = an N-acylglycine + CoA + H(+). It catalyses the reaction benzoyl-CoA + glycine = N-benzoylglycine + CoA + H(+). Functionally, mitochondrial acyltransferase which transfers an acyl group to the N-terminus of glycine and glutamine, although much less efficiently. Can conjugate a multitude of substrates to form a variety of N-acylglycines, thereby detoxify xenobiotics, such as benzoic acid or salicylic acid, and endogenous organic acids, such as isovaleric acid. The chain is Glycine N-acyltransferase (GLYAT) from Pongo abelii (Sumatran orangutan).